A 165-amino-acid polypeptide reads, in one-letter code: NADH-quinone oxidoreductase subunit I (165 aa).

4Fe-4S ferredoxin-type domains lie at 57-86 and 96-125; these read RRYD…IESE and SRYD…ETHI. C66, C69, C72, C76, C105, C108, C111, and C115 together coordinate [4Fe-4S] cluster.

This sequence belongs to the complex I 23 kDa subunit family. As to quaternary structure, NDH-1 is composed of 14 different subunits. Subunits NuoA, H, J, K, L, M, N constitute the membrane sector of the complex. Requires [4Fe-4S] cluster as cofactor.

It localises to the cell inner membrane. The enzyme catalyses a quinone + NADH + 5 H(+)(in) = a quinol + NAD(+) + 4 H(+)(out). Its function is as follows. NDH-1 shuttles electrons from NADH, via FMN and iron-sulfur (Fe-S) centers, to quinones in the respiratory chain. The immediate electron acceptor for the enzyme in this species is believed to be ubiquinone. Couples the redox reaction to proton translocation (for every two electrons transferred, four hydrogen ions are translocated across the cytoplasmic membrane), and thus conserves the redox energy in a proton gradient. This is NADH-quinone oxidoreductase subunit I from Polaromonas sp. (strain JS666 / ATCC BAA-500).